Consider the following 221-residue polypeptide: GTP-binding nuclear protein Ran-1 (221 aa).

The Small GTPase Ran-type domain maps to 10 to 174 (DYPSFKLVIV…LYLARKLAGD (165 aa)). GTP is bound at residue 21–28 (DGGTGKTT). The segment at 40-48 (KKYEPTIGV) is switch-I. Residues Gly71, 125-128 (NKVD), and 153-155 (SAK) each bind GTP. A switch-II region spans residues 71–87 (GQEKFGGLRDGYYIHGQ).

It belongs to the small GTPase superfamily. Ran family. Found in a nuclear export complex with RanGTP, exportin and pre-miRNA.

The protein localises to the nucleus. In terms of biological role, GTP-binding protein involved in nucleocytoplasmic transport. Required for the import of protein into the nucleus and also for RNA export. Involved in chromatin condensation and control of cell cycle. This chain is GTP-binding nuclear protein Ran-1 (RAN1), found in Oryza sativa subsp. indica (Rice).